Reading from the N-terminus, the 263-residue chain is HTH-type transcriptional repressor NanR (263 aa).

The interval 1 to 22 (MGLMNAFDSQTEDSSPAIGRNL) is disordered. An HTH gntR-type domain is found at 30–98 (KKLSEMVEEE…NGERARVSRP (69 aa)). A DNA-binding region (H-T-H motif) is located at residues 58 to 77 (ERELMAFFNVGRPSVREALA).

Belongs to the NanR family.

In terms of biological role, transcriptional repressor that controls expression of the genes required for the catabolism of sialic acids. The protein is HTH-type transcriptional repressor NanR of Shigella sonnei (strain Ss046).